Reading from the N-terminus, the 154-residue chain is tRNA (cytidine(34)-2'-O)-methyltransferase (154 aa).

S-adenosyl-L-methionine-binding residues include Leu78, Gly100, Leu122, and Ser130.

It belongs to the class IV-like SAM-binding methyltransferase superfamily. RNA methyltransferase TrmH family. TrmL subfamily. As to quaternary structure, homodimer.

The protein resides in the cytoplasm. It carries out the reaction cytidine(34) in tRNA + S-adenosyl-L-methionine = 2'-O-methylcytidine(34) in tRNA + S-adenosyl-L-homocysteine + H(+). It catalyses the reaction 5-carboxymethylaminomethyluridine(34) in tRNA(Leu) + S-adenosyl-L-methionine = 5-carboxymethylaminomethyl-2'-O-methyluridine(34) in tRNA(Leu) + S-adenosyl-L-homocysteine + H(+). Methylates the ribose at the nucleotide 34 wobble position in the two leucyl isoacceptors tRNA(Leu)(CmAA) and tRNA(Leu)(cmnm5UmAA). Catalyzes the methyl transfer from S-adenosyl-L-methionine to the 2'-OH of the wobble nucleotide. The chain is tRNA (cytidine(34)-2'-O)-methyltransferase from Methylovorus glucosotrophus (strain SIP3-4).